The chain runs to 699 residues: 1,4-alpha-glucan-branching enzyme (699 aa).

Substrate is bound by residues asparagine 59–glutamate 60 and tryptophan 88–proline 90. Tryptophan 104 serves as a coordination point for (1,4-alpha-D-glucosyl)n. A substrate-binding site is contributed by aspartate 115 to lysine 118. Lysine 140 contributes to the (1,4-alpha-D-glucosyl)n binding site. Phosphotyrosine is present on tyrosine 170. Glutamate 330–arginine 333 contacts substrate. Aspartate 354 acts as the Nucleophile in catalysis. The active-site Proton donor is the glutamate 409.

Belongs to the glycosyl hydrolase 13 family. GlgB subfamily. In terms of assembly, monomer.

It carries out the reaction Transfers a segment of a (1-&gt;4)-alpha-D-glucan chain to a primary hydroxy group in a similar glucan chain.. Its pathway is glycan biosynthesis; glycogen biosynthesis. In terms of biological role, glycogen-branching enzyme participates in the glycogen biosynthetic process along with glycogenin and glycogen synthase. Generates alpha-1,6-glucosidic branches from alpha-1,4-linked glucose chains, to increase solubility of the glycogen polymer. In Equus caballus (Horse), this protein is 1,4-alpha-glucan-branching enzyme (GBE1).